Reading from the N-terminus, the 479-residue chain is Acetylcholine receptor subunit alpha-type acr-15 (479 aa).

Positions 1 to 18 (MLLPILLHFLLLITQLNG) are cleaved as a signal peptide. Topologically, residues 19–230 (SPAEVRLIND…HLRRRTLYYS (212 aa)) are extracellular. 2 N-linked (GlcNAc...) asparagine glycosylation sites follow: Asn-60 and Asn-92. Cys-146 and Cys-160 are joined by a disulfide. Asn-200 carries an N-linked (GlcNAc...) asparagine glycan. Residues Cys-208 and Cys-209 are joined by a disulfide bond. A helical transmembrane segment spans residues 231–251 (FNLIAPVLLTMILVILGFTVS). The Cytoplasmic portion of the chain corresponds to 252-257 (PETCEK). A helical membrane pass occupies residues 258 to 278 (VGLQISVSLAICIFLTIMSEL). The Extracellular segment spans residues 279-285 (TPQTSEA). Residues 286 to 306 (VPLLGVFFHTCNFISVLATSF) form a helical membrane-spanning segment. Over 307 to 453 (TVYVQSFHFR…WRFAAIVVDR (147 aa)) the chain is Cytoplasmic. The helical transmembrane segment at 454–474 (LCLLAFSLLIVVVSIIIALRA) threads the bilayer. Topologically, residues 475–479 (PYLFA) are extracellular.

This sequence belongs to the ligand-gated ion channel (TC 1.A.9) family. Acetylcholine receptor (TC 1.A.9.1) subfamily. In terms of tissue distribution, expressed in interneurons, motor neurons, pharyngeal neurons and muscles.

The protein resides in the cell membrane. Its subcellular location is the postsynaptic cell membrane. In terms of biological role, after binding acetylcholine, the AChR responds by an extensive change in conformation that affects all subunits and leads to opening of an ion-conducting channel across the plasma membrane. Activity is required in glutamatergic neurons to mediate nicotine-induced and nicotine-motivated behaviors. This chain is Acetylcholine receptor subunit alpha-type acr-15, found in Caenorhabditis elegans.